The sequence spans 34 residues: MSDIN-like toxin proprotein 4 (34 aa).

Positions 1 to 10 (MSDINATRLP) are excised as a propeptide. Residues 11–17 (VWIGYSP) constitute a cross-link (cyclopeptide (Val-Pro)). Positions 18-34 (CVGDDCIALLTRGEGLC) are excised as a propeptide.

This sequence belongs to the MSDIN fungal toxin family. Processed by the macrocyclase-peptidase enzyme POPB to yield a toxic cyclic heptapeptide. POPB first removes 10 residues from the N-terminus. Conformational trapping of the remaining peptide forces the enzyme to release this intermediate rather than proceed to macrocyclization. The enzyme rebinds the remaining peptide in a different conformation and catalyzes macrocyclization of the N-terminal 7 residues. Expressed in basidiocarps.

Functionally, probable toxin that belongs to the MSDIN-like toxin family responsible for a large number of food poisoning cases and deaths. This is MSDIN-like toxin proprotein 4 from Amanita exitialis (Guangzhou destroying angel).